The chain runs to 788 residues: Endonuclease MutS2 (788 aa).

Residue 335 to 342 (GPNTGGKT) coordinates ATP. The interval 688–708 (VKSASKTKKRSGGTSITKQSA) is disordered. Over residues 699-708 (GGTSITKQSA) the composition is skewed to polar residues. One can recognise a Smr domain in the interval 713–788 (LDLRGVRVEE…GHGVTIIELK (76 aa)).

The protein belongs to the DNA mismatch repair MutS family. MutS2 subfamily. In terms of assembly, homodimer. Binds to stalled ribosomes, contacting rRNA.

Endonuclease that is involved in the suppression of homologous recombination and thus may have a key role in the control of bacterial genetic diversity. Functionally, acts as a ribosome collision sensor, splitting the ribosome into its 2 subunits. Detects stalled/collided 70S ribosomes which it binds and splits by an ATP-hydrolysis driven conformational change. Acts upstream of the ribosome quality control system (RQC), a ribosome-associated complex that mediates the extraction of incompletely synthesized nascent chains from stalled ribosomes and their subsequent degradation. Probably generates substrates for RQC. The chain is Endonuclease MutS2 from Exiguobacterium sibiricum (strain DSM 17290 / CCUG 55495 / CIP 109462 / JCM 13490 / 255-15).